Consider the following 340-residue polypeptide: Guanine nucleotide-binding protein G(I)/G(S)/G(T) subunit beta-2 (340 aa).

At serine 2 the chain carries N-acetylserine. 7 WD repeats span residues 53 to 83 (GHLA…IIWD), 95 to 125 (LRSS…SIYS), 141 to 170 (GHTG…ALWD), 182 to 212 (GHSG…KLWD), 224 to 254 (GHES…RLFD), 268 to 298 (NIIC…NIWD), and 310 to 340 (GHDN…KIWN). Tyrosine 239 carries the post-translational modification Phosphotyrosine.

It belongs to the WD repeat G protein beta family. G proteins are composed of 3 units, alpha, beta and gamma. In this context, interacts with GNAI2 and GNG2. Interacts with ARHGEF18 and RASD2. Interacts with ATXN10. Interacts with SCN8A. Expressed in all cardiac subcompartments and in the brain, with highest levels in the atrioventricular node and brain.

It localises to the cytoplasm. Its subcellular location is the perinuclear region. It is found in the cell membrane. In terms of biological role, guanine nucleotide-binding proteins (G proteins) are involved as a modulator or transducer in various transmembrane signaling systems. The beta and gamma chains are required for the GTPase activity, for replacement of GDP by GTP, and for G protein-effector interaction. The polypeptide is Guanine nucleotide-binding protein G(I)/G(S)/G(T) subunit beta-2 (GNB2) (Homo sapiens (Human)).